Reading from the N-terminus, the 106-residue chain is UPF0122 protein Exig_1902 (106 aa).

Belongs to the UPF0122 family.

Functionally, might take part in the signal recognition particle (SRP) pathway. This is inferred from the conservation of its genetic proximity to ftsY/ffh. May be a regulatory protein. This Exiguobacterium sibiricum (strain DSM 17290 / CCUG 55495 / CIP 109462 / JCM 13490 / 255-15) protein is UPF0122 protein Exig_1902.